We begin with the raw amino-acid sequence, 441 residues long: Zinc finger protein ZIC 3 (441 aa).

Residues 222–257 form a C2H2-type 1; atypical zinc finger; sequence LSCKWLEESPMNRPQKTCDRTFSSMHELVTHMTMEH. The C2H2-type 2; atypical zinc finger occupies 266 to 293; it reads HICYWEECPRGGKSFKAKYKLVNHIRVH. 3 C2H2-type zinc fingers span residues 299 to 323, 329 to 353, and 359 to 381; these read FPCP…KRTH, FKCE…MHVH, and YICK…MKVH. The disordered stretch occupies residues 375 to 441; the sequence is RKHMKVHESQ…LPPNFNEWYV (67 aa). Over residues 383–399 the composition is skewed to low complexity; sequence SQGSDSSPAASSGYESA. A compositionally biased stretch (polar residues) spans 406-429; the sequence is SANSEEPSKNSSATHQTNNSSHNT.

It belongs to the GLI C2H2-type zinc-finger protein family.

It is found in the nucleus. Its subcellular location is the cytoplasm. Functionally, probably acts as a transcriptional activator. May bind to the minimal GLI-consensus sequence 5'-GGGTGGTC-3'. Can determine the ectodermal cell fate and promote the earliest step of neural and neural crest development. Involved in establishing left-right asymmetry in the embryo. In Xenopus tropicalis (Western clawed frog), this protein is Zinc finger protein ZIC 3 (zic3).